The primary structure comprises 494 residues: 3-octaprenyl-4-hydroxybenzoate carboxy-lyase (494 aa).

N172 is a binding site for Mn(2+). Prenylated FMN contacts are provided by residues 175-177 (IYR), 189-191 (RWL), and 194-195 (RG). E238 contacts Mn(2+). D287 acts as the Proton donor in catalysis.

It belongs to the UbiD family. As to quaternary structure, homohexamer. Prenylated FMN is required as a cofactor. Mn(2+) serves as cofactor.

The protein localises to the cell membrane. It carries out the reaction a 4-hydroxy-3-(all-trans-polyprenyl)benzoate + H(+) = a 2-(all-trans-polyprenyl)phenol + CO2. Its pathway is cofactor biosynthesis; ubiquinone biosynthesis. In terms of biological role, catalyzes the decarboxylation of 3-octaprenyl-4-hydroxy benzoate to 2-octaprenylphenol, an intermediate step in ubiquinone biosynthesis. This Escherichia coli O9:H4 (strain HS) protein is 3-octaprenyl-4-hydroxybenzoate carboxy-lyase.